The following is a 349-amino-acid chain: MNTLAPRLTDLAHGGGCGCKLAPSVLQQLLANQPAARPFAQLLVGNDMADDAAVWQVDDNTCVIATTDFFMPIVDDPRDFGRIAATNAISDVYAMGGKPILALAIVGMPINKLDSTTIAKILEGGASICAEAGIPVAGGHSIDSVEPIYGLAVIGLCHPSEVRRNGGVKAGDALILTKGIGVGIYSAAIKKNALPPGCYEEMIGSTTLLNRIGADLAADPDVHALTDVTGFGVLGHGLEMARASQLSLTLRLSAIPFLSQAYMLAEQGFITGASGRNWASYGADVVLPDDLPDWQRLLLADPQTSGGLLVACAPEKAGALVEKVRLAGYPLAGIVGTAAAGAAQIKVIS.

Cys17 is a catalytic residue. ATP-binding positions include Lys20 and Met48–Asp50. Asp51 serves as a coordination point for Mg(2+). ATP-binding positions include Asp68, Asp91, and Gly139–Ser141. Mg(2+) is bound at residue Asp91. Asp227 is a Mg(2+) binding site.

The protein belongs to the selenophosphate synthase 1 family. Class I subfamily. As to quaternary structure, homodimer. It depends on Mg(2+) as a cofactor.

It catalyses the reaction hydrogenselenide + ATP + H2O = selenophosphate + AMP + phosphate + 2 H(+). In terms of biological role, synthesizes selenophosphate from selenide and ATP. In Rhizobium meliloti (strain 1021) (Ensifer meliloti), this protein is Selenide, water dikinase.